The following is a 258-amino-acid chain: Imidazole glycerol phosphate synthase subunit HisF (258 aa).

Residues Asp-11 and Asp-130 contribute to the active site.

Belongs to the HisA/HisF family. As to quaternary structure, heterodimer of HisH and HisF.

It localises to the cytoplasm. The enzyme catalyses 5-[(5-phospho-1-deoxy-D-ribulos-1-ylimino)methylamino]-1-(5-phospho-beta-D-ribosyl)imidazole-4-carboxamide + L-glutamine = D-erythro-1-(imidazol-4-yl)glycerol 3-phosphate + 5-amino-1-(5-phospho-beta-D-ribosyl)imidazole-4-carboxamide + L-glutamate + H(+). The protein operates within amino-acid biosynthesis; L-histidine biosynthesis; L-histidine from 5-phospho-alpha-D-ribose 1-diphosphate: step 5/9. IGPS catalyzes the conversion of PRFAR and glutamine to IGP, AICAR and glutamate. The HisF subunit catalyzes the cyclization activity that produces IGP and AICAR from PRFAR using the ammonia provided by the HisH subunit. In Haemophilus influenzae (strain PittEE), this protein is Imidazole glycerol phosphate synthase subunit HisF.